A 261-amino-acid chain; its full sequence is Glucosamine-6-phosphate deaminase (261 aa).

Asp-67 serves as the catalytic Proton acceptor; for enolization step. The For ring-opening step role is filled by Asp-136. His-138 serves as the catalytic Proton acceptor; for ring-opening step. Glu-143 serves as the catalytic For ring-opening step.

Belongs to the glucosamine/galactosamine-6-phosphate isomerase family. NagB subfamily.

It carries out the reaction alpha-D-glucosamine 6-phosphate + H2O = beta-D-fructose 6-phosphate + NH4(+). The protein operates within amino-sugar metabolism; N-acetylneuraminate degradation; D-fructose 6-phosphate from N-acetylneuraminate: step 5/5. Functionally, catalyzes the reversible isomerization-deamination of glucosamine 6-phosphate (GlcN6P) to form fructose 6-phosphate (Fru6P) and ammonium ion. This chain is Glucosamine-6-phosphate deaminase, found in Streptomyces avermitilis (strain ATCC 31267 / DSM 46492 / JCM 5070 / NBRC 14893 / NCIMB 12804 / NRRL 8165 / MA-4680).